A 1103-amino-acid chain; its full sequence is Detocs histidine-protein kinase DtcA (1103 aa).

The residue at position 758 (histidine 758) is a Phosphohistidine; by autocatalysis. One copy of the TPR repeat lies at 818 to 851 (TIINDAKEKVHINTGEFIESAKVFNYAIEIEFVE).

Autophosphorylated.

It catalyses the reaction ATP + protein L-histidine = ADP + protein N-phospho-L-histidine.. Functionally, sensor-kinase member of the two-component regulatory system Detocs that confers resistance to bacteriophage. When the system (DtcA-DtcB-DtcC) is expressed in a susceptible E.coli (strain MG1655) it confers resistance to bacteriophages T2, T4, T5, T7, SECphi4, SECphi6 and SECphi27; the level of resistance varies, resistance to T2, T7 and SECphi4 is not very high. DtcA (this subunit) probably autophosphorylates upon sensing viral infection, and subsequently transfers the phosphate signal to DtcC which activates it, leading to an antiviral defense; DtcB may scavenge phosphorylation signals from accidental activation of DtcA. In Enterobacter cloacae (strain JD6301), this protein is Detocs histidine-protein kinase DtcA.